Consider the following 504-residue polypeptide: Peroxisome proliferator-activated receptor gamma (504 aa).

Ser-111 is subject to Phosphoserine; by MAPK. The nuclear receptor DNA-binding region spans Ala-135–Phe-209. NR C4-type zinc fingers lie at residues Cys-138 to Cys-158 and Cys-175 to Cys-197. The interaction with FAM120B stretch occupies residues His-204–Met-279. The region spanning Asp-237–Asp-502 is the NR LBD domain. A Glycyl lysine isopeptide (Lys-Gly) (interchain with G-Cter in ubiquitin) cross-link involves residue Lys-251. Positions Pro-494–Asp-502 match the 9aaTAD motif.

It belongs to the nuclear hormone receptor family. NR1 subfamily. Interacts with FOXO1 (acetylated form). Heterodimer with other nuclear receptors, such as RXRA. The heterodimer with the retinoic acid receptor RXRA is called adipocyte-specific transcription factor ARF6. Interacts with NCOA6 coactivator, leading to a strong increase in transcription of target genes. Interacts with coactivator PPARBP, leading to a mild increase in transcription of target genes. Interacts with NOCA7 in a ligand-inducible manner. Interacts with NCOA1 and NCOA2 LXXLL motifs. Interacts with ASXL1, ASXL2, DNTTIP2, FAM120B, MAP2K1/MEK1, NR0B2, PDPK1, PRDM16, PRMT2 and TGFB1I1. Interacts (when activated by agonist) with PPP5C. Interacts with HELZ2 and THRAP3; the interaction stimulates the transcriptional activity of PPARG. Interacts with PER2, the interaction is ligand dependent and blocks PPARG recruitment to target promoters. Interacts with NOCT. Interacts with ACTN4. Interacts (when in the liganded conformation) with GPS2. Interacts with CRY1 and CRY2 in a ligand-dependent manner. In the absence of hormonal ligand, interacts with TACC1. In macrophages, interacts with PAQR3 and STUB1; the interactions promote PPARG poylubiquitination and STUB1-mediated degradation. Phosphorylated at basal conditions and dephosphorylated when treated with the ligand. May be dephosphorylated by PPP5C. The phosphorylated form may be inactive and dephosphorylation induces adipogenic activity. In terms of processing, ubiquitinated by E3 ubiquitin-protein ligase complex containing FBXO9; leading to proteasomal degradation. Ubiquitinated at Lys-251 by TRIM55 leading to proteasomal degradation. Ubiquitinated by E3 ubiquitin-protein ligase STUB1/CHIP; leading to proteasomal degradation. Highest expression in adipose tissue and lower in spleen. Very low levels in kidney, intestine, lung and muscle.

It is found in the nucleus. The protein localises to the cytoplasm. Its activity is regulated as follows. PDPK1 activates its transcriptional activity independently of its kinase activity. Functionally, nuclear receptor that binds peroxisome proliferators such as hypolipidemic drugs and fatty acids. Once activated by a ligand, the nuclear receptor binds to DNA specific PPAR response elements (PPRE) and modulates the transcription of its target genes, such as acyl-CoA oxidase. It therefore controls the peroxisomal beta-oxidation pathway of fatty acids. Key regulator of adipocyte differentiation and glucose homeostasis. ARF6 acts as a key regulator of the tissue-specific adipocyte P2 (aP2) enhancer. Acts as a critical regulator of gut homeostasis by suppressing NF-kappa-B-mediated pro-inflammatory responses. Plays a role in the regulation of cardiovascular circadian rhythms by regulating the transcription of BMAL1 in the blood vessels. This Sus scrofa (Pig) protein is Peroxisome proliferator-activated receptor gamma (PPARG).